The sequence spans 266 residues: Probable septum site-determining protein MinC (266 aa).

Residues M1 to E21 show a composition bias toward low complexity. Residues M1 to Q28 are disordered.

It belongs to the MinC family. As to quaternary structure, interacts with MinD and FtsZ.

Its function is as follows. Cell division inhibitor that blocks the formation of polar Z ring septums. Rapidly oscillates between the poles of the cell to destabilize FtsZ filaments that have formed before they mature into polar Z rings. Prevents FtsZ polymerization. The polypeptide is Probable septum site-determining protein MinC (Thermosynechococcus vestitus (strain NIES-2133 / IAM M-273 / BP-1)).